Reading from the N-terminus, the 154-residue chain is MGKSASKQFHNEVLKAHNEYRQKHGVPPLKLCKNLNREAQQYSEALASTRILKHSPESSRGQCGENLAWASYDQTGKEVADRWYSEIKNYNFQQPGFTSGTGHFTAMVWKNTKKMGVGKASASDGSSFVVARYFPAGNVVNEGFFEENVLPPKK.

The interval 1 to 21 (MGKSASKQFHNEVLKAHNEYR) is disordered. Residue Gly2 is the site of N-myristoyl glycine attachment. Positions 9–21 (FHNEVLKAHNEYR) are enriched in basic and acidic residues. An SCP domain is found at 14-132 (LKAHNEYRQK…SDGSSFVVAR (119 aa)). Residues 30-53 (KLCKNLNREAQQYSEALASTRILK) are a coiled coil. An interaction with CAV1 region spans residues 91–98 (NFQQPGFT).

Belongs to the CRISP family. In terms of assembly, homodimer. Interacts with CAV1. As to expression, highest expression in lung and peripheral leukocytes, and minor expression in liver and kidney.

It localises to the golgi apparatus membrane. The polypeptide is Golgi-associated plant pathogenesis-related protein 1 (GLIPR2) (Homo sapiens (Human)).